Here is a 561-residue protein sequence, read N- to C-terminus: Liver carboxylesterase B-1 (561 aa).

The signal sequence occupies residues 1-18; it reads MCLRSLFLVSLATCVVCG. Asn-79 carries N-linked (GlcNAc...) asparagine glycosylation. Cys-87 and Cys-116 are oxidised to a cystine. Ser-221 acts as the Acyl-ester intermediate in catalysis. Cys-273 and Cys-284 form a disulfide bridge. Catalysis depends on charge relay system residues Glu-353 and His-466. The short motif at 558–561 is the Prevents secretion from ER element; that stretch reads HNEL.

The protein belongs to the type-B carboxylesterase/lipase family. As to quaternary structure, monomer.

Its subcellular location is the endoplasmic reticulum lumen. It catalyses the reaction a carboxylic ester + H2O = an alcohol + a carboxylate + H(+). In terms of biological role, involved in the detoxification of xenobiotics and in the activation of ester and amide prodrugs. The chain is Liver carboxylesterase B-1 from Rattus norvegicus (Rat).